The primary structure comprises 103 residues: MTETNKNIHQEAEQEITLIDDQGNEELYQVLFTFDSEDYGKSYVLLYPASSAEDEEVDIQAFAFTSDVAGDASQGDLFPIEDDEEWEMVEEVLNTFLADDNMQ.

The protein belongs to the UPF0473 family.

The protein is UPF0473 protein LCA_0390 of Latilactobacillus sakei subsp. sakei (strain 23K) (Lactobacillus sakei subsp. sakei).